The chain runs to 135 residues: Histone H2B.4 (135 aa).

Composition is skewed to basic and acidic residues over residues 1-12 (MAPKAAEKKPVE) and 23-35 (EKKVPTSKEGGEK). A disordered region spans residues 1 to 43 (MAPKAAEKKPVEKTPAVKKPKAEKKVPTSKEGGEKKGKKKSKK). An N6-acetyllysine mark is found at K8 and K24. K131 participates in a covalent cross-link: Glycyl lysine isopeptide (Lys-Gly) (interchain with G-Cter in ubiquitin).

The protein belongs to the histone H2B family. In terms of assembly, the nucleosome is a histone octamer containing two molecules each of H2A, H2B, H3 and H4 assembled in one H3-H4 heterotetramer and two H2A-H2B heterodimers. The octamer wraps approximately 147 bp of DNA. In terms of processing, can be acetylated to form H2BK6ac and H2BK33ac. Monoubiquitinated to form H2BK143ub1; may give a specific tag for epigenetic transcriptional activation. As to expression, expressed preferentially in meristematic tissues.

The protein resides in the nucleus. It localises to the chromosome. In terms of biological role, core component of nucleosome. Nucleosomes wrap and compact DNA into chromatin, limiting DNA accessibility to the cellular machineries which require DNA as a template. Histones thereby play a central role in transcription regulation, DNA repair, DNA replication and chromosomal stability. DNA accessibility is regulated via a complex set of post-translational modifications of histones, also called histone code, and nucleosome remodeling. The sequence is that of Histone H2B.4 (TH153) from Triticum aestivum (Wheat).